The following is a 261-amino-acid chain: Flagellar L-ring protein (261 aa).

Residues 1-15 (MKRLLCLLLLTTLTG) form the signal peptide. Cysteine 16 carries the N-palmitoyl cysteine lipid modification. A lipid anchor (S-diacylglycerol cysteine) is attached at cysteine 16. A compositionally biased stretch (basic and acidic residues) spans 121 to 133 (KSADAELSKKNDS). The disordered stretch occupies residues 121–140 (KSADAELSKKNDSSMDPLQV).

The protein belongs to the FlgH family. In terms of assembly, the basal body constitutes a major portion of the flagellar organelle and consists of four rings (L,P,S, and M) mounted on a central rod.

The protein localises to the cell outer membrane. Its subcellular location is the bacterial flagellum basal body. Functionally, assembles around the rod to form the L-ring and probably protects the motor/basal body from shearing forces during rotation. The polypeptide is Flagellar L-ring protein (Aliivibrio salmonicida (strain LFI1238) (Vibrio salmonicida (strain LFI1238))).